Reading from the N-terminus, the 137-residue chain is Large ribosomal subunit protein uL16 (137 aa).

Belongs to the universal ribosomal protein uL16 family. Part of the 50S ribosomal subunit.

Functionally, binds 23S rRNA and is also seen to make contacts with the A and possibly P site tRNAs. This chain is Large ribosomal subunit protein uL16, found in Rhizobium etli (strain CIAT 652).